Reading from the N-terminus, the 59-residue chain is Kunitz-type serine protease inhibitor dendrotoxin E (59 aa).

A BPTI/Kunitz inhibitor domain is found at 7-57; sequence CKLPAEPGPCKASIPAFYYNWAAKKCQLFHYGGCKGNANRFSTIEKCRHAC. 3 disulfides stabilise this stretch: C7-C57, C16-C40, and C32-C53.

This sequence belongs to the venom Kunitz-type family. In terms of tissue distribution, expressed by the venom gland.

Its subcellular location is the secreted. Functionally, serine protease inhibitor that inhibits trypsin. May also inhibit voltage-gated potassium channels (Kv). Binds transition metal ions such as copper and cobalt. This is Kunitz-type serine protease inhibitor dendrotoxin E from Dendroaspis polylepis polylepis (Black mamba).